Here is a 576-residue protein sequence, read N- to C-terminus: Quinone-reactive Ni/Fe-hydrogenase large chain (576 aa).

The Ni(2+) site is built by Cys62, Cys65, Cys547, and Cys550.

The protein belongs to the [NiFe]/[NiFeSe] hydrogenase large subunit family. Heterodimer of a large and a small subunit. It depends on Ni(2+) as a cofactor.

It is found in the cell membrane. The enzyme catalyses H2 + a menaquinone = a menaquinol. In terms of biological role, this enzyme recycles the H(2) produced by nitrogenase to increase the production of ATP and to protect nitrogenase against inhibition or damage by O(2) under carbon- or phosphate-limited conditions. This Wolinella succinogenes (strain ATCC 29543 / DSM 1740 / CCUG 13145 / JCM 31913 / LMG 7466 / NCTC 11488 / FDC 602W) (Vibrio succinogenes) protein is Quinone-reactive Ni/Fe-hydrogenase large chain (hydB).